We begin with the raw amino-acid sequence, 320 residues long: Cytochrome f (320 aa).

The first 35 residues, 1 to 35, serve as a signal peptide directing secretion; sequence MENKNTFSWVKEQMTRSISVSIMIYVITQTSISNA. Residues Tyr36, Cys56, Cys59, and His60 each coordinate heme. Residues 286 to 306 form a helical membrane-spanning segment; sequence VQGLLFFFASVILAQVFLVLK.

The protein belongs to the cytochrome f family. In terms of assembly, the 4 large subunits of the cytochrome b6-f complex are cytochrome b6, subunit IV (17 kDa polypeptide, petD), cytochrome f and the Rieske protein, while the 4 small subunits are PetG, PetL, PetM and PetN. The complex functions as a dimer. Heme serves as cofactor.

The protein localises to the plastid. The protein resides in the chloroplast thylakoid membrane. Its function is as follows. Component of the cytochrome b6-f complex, which mediates electron transfer between photosystem II (PSII) and photosystem I (PSI), cyclic electron flow around PSI, and state transitions. This is Cytochrome f from Lolium perenne (Perennial ryegrass).